Here is a 429-residue protein sequence, read N- to C-terminus: Apolipoprotein A-IV (429 aa).

Positions 1–20 are cleaved as a signal peptide; that stretch reads MFLKAVVLTLALVAVTGARA. Tandem repeats lie at residues 33 to 54, 60 to 81, 82 to 103, 115 to 136, 137 to 158, 159 to 180, 181 to 202, 203 to 224, 225 to 246, 247 to 268, 269 to 286, 287 to 308, and 309 to 330. The interval 33 to 330 is 13 X 22 AA approximate tandem repeats; it reads DYFSQLSSNA…QMEQLRQKLG (298 aa). The disordered stretch occupies residues 359-429; sequence KEKESQDNTL…QVQMLAPLES (71 aa). Residues 381-420 show a composition bias toward low complexity; it reads QEQQQEQEQEQQQQQEQQQQQEQQREQQQQEQQQEQQQEQ.

Belongs to the apolipoprotein A1/A4/E family. Homodimer. Post-translationally, phosphorylation sites are present in the extracellular medium. In terms of tissue distribution, secreted in plasma.

The protein resides in the secreted. Functionally, may have a role in chylomicrons and VLDL secretion and catabolism. Required for efficient activation of lipoprotein lipase by ApoC-II; potent activator of LCAT. Apoa-IV is a major component of HDL and chylomicrons. This is Apolipoprotein A-IV (APOA4) from Macaca fascicularis (Crab-eating macaque).